Consider the following 642-residue polypeptide: Protein BZZ1 (642 aa).

Residues 6-272 (YKFSDELHDD…EIAKNEPVLD (267 aa)) enclose the F-BAR domain. The stretch at 113-190 (LDIAEKLKKL…QRNLKLSESD (78 aa)) forms a coiled coil. The Phorbol-ester/DAG-type zinc-finger motif lies at 397 to 447 (FHDFKHVSFKLPTSCSYCREIIWGLSKRGCVCKNCGFKCHARCELLVPANC). 2 consecutive SH3 domains span residues 515-575 (ASKV…LNDE) and 584-642 (GDSS…VTDV).

It belongs to the BZZ1 family.

It localises to the cell tip. The protein localises to the cytoplasm. The protein resides in the cytoskeleton. Its subcellular location is the actin patch. Plays a role in endocytosis and trafficking to the vacuole. Functions with type I myosins to restore polarity of the actin cytoskeleton after NaCl stress. The polypeptide is Protein BZZ1 (bzz1) (Schizosaccharomyces pombe (strain 972 / ATCC 24843) (Fission yeast)).